Here is a 742-residue protein sequence, read N- to C-terminus: Phosphatidylinositol 4-phosphate 5-kinase its3 (742 aa).

Disordered regions lie at residues 1-21 (MKID…IPSY) and 82-228 (LFKE…PDIG). Composition is skewed to low complexity over residues 90 to 105 (PSNP…SNDS) and 129 to 142 (PSSN…LQNL). Polar residues-rich tracts occupy residues 158–181 (RSSS…SSSQ) and 193–218 (EKNS…TSGS). The 399-residue stretch at 264–662 (GHENYVTAYN…RFYKFVESSI (399 aa)) folds into the PIPK domain. The disordered stretch occupies residues 677-742 (QDGQRVNKQQ…RNVTTNTSSS (66 aa)). Positions 680-719 (QRVNKQQSVNAGNVRTNNKHGSLNNNTAPSSRNAKSTSAH) are enriched in polar residues.

In terms of assembly, interacts with opy1 (via domain PH 1); the interaction is direct but opy1 does not appear to regulate its3 localization or function. Post-translationally, phosphorylated by casein kinase I. Phosphorylation inactivates the enzyme.

Its subcellular location is the cell membrane. It catalyses the reaction a 1,2-diacyl-sn-glycero-3-phospho-(1D-myo-inositol 4-phosphate) + ATP = a 1,2-diacyl-sn-glycero-3-phospho-(1D-myo-inositol-4,5-bisphosphate) + ADP + H(+). Its function is as follows. Catalyzes the phosphorylation of phosphatidylinositol 4-phosphate on the fifth hydroxyl of the myo-inositol ring, to form phosphatidylinositol 4,5-bisphosphate. Involved, together with the calcineurin ppb1, in cytokinesis. The chain is Phosphatidylinositol 4-phosphate 5-kinase its3 (its3) from Schizosaccharomyces pombe (strain 972 / ATCC 24843) (Fission yeast).